The following is a 55-amino-acid chain: Probable Rubredoxin-2 (55 aa).

A Rubredoxin-like domain is found at 4 to 54; sequence MARYQCMCGWVYDEDKGEPSQNIPPGTKFEDLPDTFRCPQCGLGKNAFRKI. Cys9, Cys11, Cys41, and Cys44 together coordinate Fe cation.

Belongs to the rubredoxin family. It depends on Fe(3+) as a cofactor.

Rubredoxin is a small nonheme, iron protein lacking acid-labile sulfide. Its single Fe, chelated to 4 Cys, functions as an electron acceptor and may also stabilize the conformation of the molecule. The chain is Probable Rubredoxin-2 from Methanocaldococcus jannaschii (strain ATCC 43067 / DSM 2661 / JAL-1 / JCM 10045 / NBRC 100440) (Methanococcus jannaschii).